The sequence spans 458 residues: Cysteine--tRNA ligase (458 aa).

Cys-29 lines the Zn(2+) pocket. The 'HIGH' region motif lies at Pro-31–Asn-41. Positions 211, 236, and 240 each coordinate Zn(2+). Residues Lys-269–Ser-273 carry the 'KMSKS' region motif. Lys-272 contributes to the ATP binding site.

It belongs to the class-I aminoacyl-tRNA synthetase family. In terms of assembly, monomer. The cofactor is Zn(2+).

The protein resides in the cytoplasm. It carries out the reaction tRNA(Cys) + L-cysteine + ATP = L-cysteinyl-tRNA(Cys) + AMP + diphosphate. This chain is Cysteine--tRNA ligase, found in Beijerinckia indica subsp. indica (strain ATCC 9039 / DSM 1715 / NCIMB 8712).